Reading from the N-terminus, the 370-residue chain is tRNA pseudouridine(27/28) synthase (370 aa).

Aspartate 56 acts as the Nucleophile in catalysis. Tyrosine 111 lines the substrate pocket.

This sequence belongs to the tRNA pseudouridine synthase TruA family.

The protein localises to the mitochondrion. It carries out the reaction uridine(27/28) in mitochondrial tRNA = pseudouridine(27/28) in mitochondrial tRNA. Functionally, mitochondrial-specific pseudouridine synthase catalyzing the formation of pseudouridine at positions 27 and 28 in the anticodon stem and loop of mitochondrial transfer RNAs. The sequence is that of tRNA pseudouridine(27/28) synthase (PUS2) from Saccharomyces cerevisiae (strain ATCC 204508 / S288c) (Baker's yeast).